Here is a 509-residue protein sequence, read N- to C-terminus: Probable glycine dehydrogenase (decarboxylating) subunit 2 (509 aa).

Lys-278 carries the post-translational modification N6-(pyridoxal phosphate)lysine.

Belongs to the GcvP family. C-terminal subunit subfamily. The glycine cleavage system is composed of four proteins: P, T, L and H. In this organism, the P 'protein' is a heterodimer of two subunits. Requires pyridoxal 5'-phosphate as cofactor.

It carries out the reaction N(6)-[(R)-lipoyl]-L-lysyl-[glycine-cleavage complex H protein] + glycine + H(+) = N(6)-[(R)-S(8)-aminomethyldihydrolipoyl]-L-lysyl-[glycine-cleavage complex H protein] + CO2. In terms of biological role, the glycine cleavage system catalyzes the degradation of glycine. The P protein binds the alpha-amino group of glycine through its pyridoxal phosphate cofactor; CO(2) is released and the remaining methylamine moiety is then transferred to the lipoamide cofactor of the H protein. In Saccharolobus islandicus (strain Y.N.15.51 / Yellowstone #2) (Sulfolobus islandicus), this protein is Probable glycine dehydrogenase (decarboxylating) subunit 2.